A 172-amino-acid chain; its full sequence is Phosphopantetheine adenylyltransferase (172 aa).

Position 14 (threonine 14) interacts with substrate. ATP contacts are provided by residues 14–15 and histidine 22; that span reads TF. Residues lysine 46, leucine 78, and arginine 92 each coordinate substrate. Residues 93-95, glutamate 103, and 128-134 each bind ATP; these read GLR and WLYISST.

The protein belongs to the bacterial CoaD family. As to quaternary structure, homohexamer. The cofactor is Mg(2+).

It localises to the cytoplasm. It catalyses the reaction (R)-4'-phosphopantetheine + ATP + H(+) = 3'-dephospho-CoA + diphosphate. Its pathway is cofactor biosynthesis; coenzyme A biosynthesis; CoA from (R)-pantothenate: step 4/5. Its function is as follows. Reversibly transfers an adenylyl group from ATP to 4'-phosphopantetheine, yielding dephospho-CoA (dPCoA) and pyrophosphate. In Lawsonia intracellularis (strain PHE/MN1-00), this protein is Phosphopantetheine adenylyltransferase.